Reading from the N-terminus, the 729-residue chain is Fatty acid oxidation complex subunit alpha (729 aa).

The interval 1–189 (MLYQSETLQL…KIGLVDAVVD (189 aa)) is enoyl-CoA hydratase/isomerase. Substrate is bound at residue D296. The tract at residues 311 to 729 (AAPKLAAVLG…LLDVSTNQPA (419 aa)) is 3-hydroxyacyl-CoA dehydrogenase. Residues M324, D343, 400-402 (VVE), K407, and S429 each bind NAD(+). The For 3-hydroxyacyl-CoA dehydrogenase activity role is filled by H450. Residue N453 participates in NAD(+) binding. 2 residues coordinate substrate: N500 and Y660.

It in the N-terminal section; belongs to the enoyl-CoA hydratase/isomerase family. The protein in the C-terminal section; belongs to the 3-hydroxyacyl-CoA dehydrogenase family. As to quaternary structure, heterotetramer of two alpha chains (FadB) and two beta chains (FadA).

It carries out the reaction a (3S)-3-hydroxyacyl-CoA + NAD(+) = a 3-oxoacyl-CoA + NADH + H(+). It catalyses the reaction a (3S)-3-hydroxyacyl-CoA = a (2E)-enoyl-CoA + H2O. The enzyme catalyses a 4-saturated-(3S)-3-hydroxyacyl-CoA = a (3E)-enoyl-CoA + H2O. The catalysed reaction is (3S)-3-hydroxybutanoyl-CoA = (3R)-3-hydroxybutanoyl-CoA. It carries out the reaction a (3Z)-enoyl-CoA = a 4-saturated (2E)-enoyl-CoA. It catalyses the reaction a (3E)-enoyl-CoA = a 4-saturated (2E)-enoyl-CoA. Its pathway is lipid metabolism; fatty acid beta-oxidation. Functionally, involved in the aerobic and anaerobic degradation of long-chain fatty acids via beta-oxidation cycle. Catalyzes the formation of 3-oxoacyl-CoA from enoyl-CoA via L-3-hydroxyacyl-CoA. It can also use D-3-hydroxyacyl-CoA and cis-3-enoyl-CoA as substrate. The chain is Fatty acid oxidation complex subunit alpha from Yersinia pseudotuberculosis serotype IB (strain PB1/+).